Here is a 362-residue protein sequence, read N- to C-terminus: NAD(P)H-quinone oxidoreductase subunit 1, chloroplastic (362 aa).

8 helical membrane passes run 29–49 (ILPI…IVWL), 103–123 (IAVI…HFVL), 128–148 (IGVF…LMAG), 164–184 (AAQS…ISLL), 202–222 (FFGW…ISSL), 247–267 (YSGI…LVSS), 303–323 (TMGI…SITI), and 335–355 (LLNL…LLTT).

This sequence belongs to the complex I subunit 1 family. As to quaternary structure, NDH is composed of at least 16 different subunits, 5 of which are encoded in the nucleus.

It localises to the plastid. Its subcellular location is the chloroplast thylakoid membrane. The enzyme catalyses a plastoquinone + NADH + (n+1) H(+)(in) = a plastoquinol + NAD(+) + n H(+)(out). The catalysed reaction is a plastoquinone + NADPH + (n+1) H(+)(in) = a plastoquinol + NADP(+) + n H(+)(out). Functionally, NDH shuttles electrons from NAD(P)H:plastoquinone, via FMN and iron-sulfur (Fe-S) centers, to quinones in the photosynthetic chain and possibly in a chloroplast respiratory chain. The immediate electron acceptor for the enzyme in this species is believed to be plastoquinone. Couples the redox reaction to proton translocation, and thus conserves the redox energy in a proton gradient. The protein is NAD(P)H-quinone oxidoreductase subunit 1, chloroplastic of Triticum aestivum (Wheat).